Consider the following 1001-residue polypeptide: E3 ubiquitin-protein ligase BRE1B (1001 aa).

The segment at 1–40 (MSGLSNKRAAGDGGSGPPEKKMNREEKTTTTLIEPIRLGG) is disordered. Residues 18-28 (PEKKMNREEKT) are compositionally biased toward basic and acidic residues. Lysine 20 is modified (N6-acetyllysine). Serine 42 carries the phosphoserine modification. Residues 55 to 91 (KNKKLAERLEQRQACEDELRERIEKLEKRQATDDATL) adopt a coiled-coil conformation. Positions 122–142 (TEVPGCQEGLTRDVIPRPDPG) are disordered. Coiled coils occupy residues 189-377 (KAAV…LRSL) and 437-525 (LQKK…ASGS). 2 positions are modified to N6-acetyllysine: lysine 355 and lysine 517. Positions 519 to 647 (RAQASGSSHC…KAKVEEAKRK (129 aa)) are disordered. Residues 565-576 (ALLAGATSATSS) show a composition bias toward low complexity. Residues lysine 578 and lysine 579 each participate in a glycyl lysine isopeptide (Lys-Gly) (interchain with G-Cter in SUMO2) cross-link. A phosphoserine mark is found at serine 584 and serine 585. 2 stretches are compositionally biased toward basic and acidic residues: residues 602-619 (RGREPEARPKRELREREG) and 633-647 (RADREKAKVEEAKRK). Residues 627–946 (AASTLSRADR…EEIKEYKARL (320 aa)) are a coiled coil. The RING-type zinc finger occupies 948 to 987 (CPCCNTRKKDAVLTKCFHVFCFECVRGRYEARQRKCPKCN).

It belongs to the BRE1 family. As to quaternary structure, component of the RNF20/40 complex (also known as BRE1 complex) probably composed of 2 copies of RNF20/BRE1A and 2 copies of RNF40/BRE1B. Interacts with UBE2E1/UBCH6. Interacts with RB1 and WAC.

The protein resides in the nucleus. It catalyses the reaction S-ubiquitinyl-[E2 ubiquitin-conjugating enzyme]-L-cysteine + [acceptor protein]-L-lysine = [E2 ubiquitin-conjugating enzyme]-L-cysteine + N(6)-ubiquitinyl-[acceptor protein]-L-lysine.. Its pathway is protein modification; protein ubiquitination. Component of the RNF20/40 E3 ubiquitin-protein ligase complex that mediates monoubiquitination of 'Lys-120' of histone H2B (H2BK120ub1). H2BK120ub1 gives a specific tag for epigenetic transcriptional activation and is also prerequisite for histone H3 'Lys-4' and 'Lys-79' methylation (H3K4me and H3K79me, respectively). It thereby plays a central role in histone code and gene regulation. The RNF20/40 complex forms a H2B ubiquitin ligase complex in cooperation with the E2 enzyme UBE2A or UBE2B; reports about the cooperation with UBE2E1/UBCH are contradictory. Required for transcriptional activation of Hox genes. The sequence is that of E3 ubiquitin-protein ligase BRE1B (Rnf40) from Mus musculus (Mouse).